The primary structure comprises 159 residues: Transcription elongation factor GreA (159 aa).

The protein belongs to the GreA/GreB family.

Functionally, necessary for efficient RNA polymerase transcription elongation past template-encoded arresting sites. The arresting sites in DNA have the property of trapping a certain fraction of elongating RNA polymerases that pass through, resulting in locked ternary complexes. Cleavage of the nascent transcript by cleavage factors such as GreA or GreB allows the resumption of elongation from the new 3'terminus. GreA releases sequences of 2 to 3 nucleotides. This Mycoplasmoides gallisepticum (strain R(low / passage 15 / clone 2)) (Mycoplasma gallisepticum) protein is Transcription elongation factor GreA.